Here is an 888-residue protein sequence, read N- to C-terminus: 3-hydroxy-3-methylglutaryl-coenzyme A reductase (888 aa).

The Cytoplasmic portion of the chain corresponds to 1–9; sequence MLSRLFRMH. A helical transmembrane segment spans residues 10–39; that stretch reads GLFVASHPWEVIVGTVTLTICMMSMNMFTG. Over 40–56 the chain is Lumenal; sequence NNKICGWNYECPKFEED. The helical transmembrane segment at 57–78 threads the bilayer; the sequence is VLSSDIIILTITRCIAILYIYF. Residues 61–218 form the SSD domain; it reads DIIILTITRC…MTFFPACVSL (158 aa). An INSIG-binding motif motif is present at residues 75–78; the sequence is YIYF. Residues 79 to 89 are Cytoplasmic-facing; the sequence is QFQNLRQLGSK. Lys89 is covalently cross-linked (Glycyl lysine isopeptide (Lys-Gly) (interchain with G-Cter in ubiquitin)). A helical transmembrane segment spans residues 90–114; it reads YILGIAGLFTIFSSFVFSTVVIHFL. Residues 115 to 123 are Lumenal-facing; sequence DKELTGLNE. The helical transmembrane segment at 124–149 threads the bilayer; it reads ALPFFLLLIDLSRASTLAKFALSSNS. At 150-159 the chain is on the cytoplasmic side; sequence QDEVRENIAR. A helical transmembrane segment spans residues 160–187; it reads GMAILGPTFTLDALVECLVIGVGTMSGV. Over 188–191 the chain is Lumenal; it reads RQLE. A helical membrane pass occupies residues 192 to 220; the sequence is IMCCFGCMSVLANYFVFMTFFPACVSLVL. Over 221–248 the chain is Cytoplasmic; that stretch reads ELSRESREGRPIWLLSHFARVLEEEENK. Residue Lys248 forms a Glycyl lysine isopeptide (Lys-Gly) (interchain with G-Cter in ubiquitin) linkage. The helical transmembrane segment at 249–275 threads the bilayer; the sequence is PNPVTQRVKMIMSLGLVLVHAHSRWIA. The Lumenal segment spans residues 276–314; sequence DPSPQNSTADTSKVSLGLDENVSKRIEPSVSLWQFYLSK. 2 N-linked (GlcNAc...) asparagine glycosylation sites follow: Asn281 and Asn296. Residues 315–339 form a helical membrane-spanning segment; it reads MISMDIEQVITLSLALLLAVKYIFF. At 340–888 the chain is on the cytoplasmic side; sequence EQTETESTLS…LQGACTKKTA (549 aa). Catalysis depends on charge relay system residues Glu559, Lys691, and Asp767. Residue His866 is the Proton donor of the active site. Residue Ser872 is modified to Phosphoserine; by AMPK.

The protein belongs to the HMG-CoA reductase family. As to quaternary structure, homotetramer. Homodimer. Interacts (via its SSD) with INSIG1; the interaction, accelerated by sterols, leads to the recruitment of HMGCR to AMFR/gp78 for its ubiquitination by the sterol-mediated ERAD pathway. Interacts with UBIAD1. In terms of processing, undergoes sterol-mediated ubiquitination and ER-associated degradation (ERAD). Accumulation of sterols in the endoplasmic reticulum (ER) membrane, triggers binding of the reductase to the ER membrane protein INSIG1 or INSIG2. The INSIG1 binding leads to the recruitment of the ubiquitin ligase, AMFR/gp78, RNF139 or RNF145, initiating ubiquitination of the reductase. The ubiquitinated reductase is then extracted from the ER membrane and delivered to cytosolic 26S proteosomes by a mechanism probably mediated by the ATPase Valosin-containing protein VCP/p97. The INSIG2-binding leads to the recruitment of the ubiquitin ligase RNF139, initiating ubiquitination of the reductase. Lys-248 is the main site of ubiquitination. Ubiquitination is enhanced by the presence of a geranylgeranylated protein. N-glycosylated. Deglycosylated by NGLY1 on release from the endoplasmic reticulum (ER) in a sterol-mediated manner. Post-translationally, phosphorylated. Phosphorylation at Ser-872 reduces the catalytic activity.

The protein localises to the endoplasmic reticulum membrane. The protein resides in the peroxisome membrane. The enzyme catalyses (R)-mevalonate + 2 NADP(+) + CoA = (3S)-3-hydroxy-3-methylglutaryl-CoA + 2 NADPH + 2 H(+). Its pathway is metabolic intermediate biosynthesis; (R)-mevalonate biosynthesis; (R)-mevalonate from acetyl-CoA: step 3/3. With respect to regulation, regulated by a negative feedback mechanism through sterols and non-sterol metabolites derived from mevalonate. Phosphorylation at Ser-872 down-regulates the catalytic activity. Its function is as follows. Catalyzes the conversion of (3S)-hydroxy-3-methylglutaryl-CoA (HMG-CoA) to mevalonic acid, the rate-limiting step in the synthesis of cholesterol and other isoprenoids, thus plays a critical role in cellular cholesterol homeostasis. The sequence is that of 3-hydroxy-3-methylglutaryl-coenzyme A reductase (HMGCR) from Pongo abelii (Sumatran orangutan).